Here is a 1400-residue protein sequence, read N- to C-terminus: DNA-directed RNA polymerase subunit beta' (1400 aa).

Zn(2+) contacts are provided by Cys71, Cys73, Cys86, and Cys89. Residues Asp462, Asp464, and Asp466 each coordinate Mg(2+). Cys810, Cys884, Cys891, and Cys894 together coordinate Zn(2+).

The protein belongs to the RNA polymerase beta' chain family. As to quaternary structure, the RNAP catalytic core consists of 2 alpha, 1 beta, 1 beta' and 1 omega subunit. When a sigma factor is associated with the core the holoenzyme is formed, which can initiate transcription. Mg(2+) is required as a cofactor. Zn(2+) serves as cofactor.

It carries out the reaction RNA(n) + a ribonucleoside 5'-triphosphate = RNA(n+1) + diphosphate. Its function is as follows. DNA-dependent RNA polymerase catalyzes the transcription of DNA into RNA using the four ribonucleoside triphosphates as substrates. This is DNA-directed RNA polymerase subunit beta' from Rhodopseudomonas palustris (strain TIE-1).